Consider the following 112-residue polypeptide: Nitrogen regulatory protein P-II (112 aa).

Tyr51 is subject to O-UMP-tyrosine.

The protein belongs to the P(II) protein family. In terms of assembly, homotrimer.

In terms of biological role, in nitrogen-limiting conditions, when the ratio of Gln to 2-ketoglutarate decreases, P-II is uridylylated to P-II-UMP. P-II-UMP allows the deadenylation of glutamine synthetase (GS), thus activating the enzyme. Conversely, in nitrogen excess P-II is deuridylated and promotes the adenylation of GS. P-II indirectly controls the transcription of the GS gene (glnA). P-II prevents NR-II-catalyzed conversion of NR-I to NR-I-phosphate, the transcriptional activator of glnA. When P-II is uridylylated to P-II-UMP, these events are reversed. In Mycobacterium bovis (strain ATCC BAA-935 / AF2122/97), this protein is Nitrogen regulatory protein P-II (glnB).